The following is a 211-amino-acid chain: Protein-L-isoaspartate O-methyltransferase (211 aa).

Ser60 is an active-site residue.

This sequence belongs to the methyltransferase superfamily. L-isoaspartyl/D-aspartyl protein methyltransferase family.

The protein localises to the cytoplasm. The catalysed reaction is [protein]-L-isoaspartate + S-adenosyl-L-methionine = [protein]-L-isoaspartate alpha-methyl ester + S-adenosyl-L-homocysteine. Catalyzes the methyl esterification of L-isoaspartyl residues in peptides and proteins that result from spontaneous decomposition of normal L-aspartyl and L-asparaginyl residues. It plays a role in the repair and/or degradation of damaged proteins. The protein is Protein-L-isoaspartate O-methyltransferase of Pseudomonas syringae pv. syringae (strain B728a).